A 771-amino-acid chain; its full sequence is MMQTQVASRAGYSNLPQFGAGIAQDIKTQAINNLKECLKLTTINRFLTSSYEEDAKSVERKIFSAVYQMTKIGLIDREKREINAIWFTFVGLSAQNIRHLEICSITDFNALFSITNQELRSLADRGRLDVETKRKLLQSTVILQNHWNAYHSRTSSGSTDEPSGQSTPAIVTPSPKFNVPSLSVTSAKMIQSSSMGFATTPKSPKTSSRLVHAIPHKWHRSTKFRFSGDAVCHFCQRPLGFGFLNAWEKCRSCKWKVHTQCKGRVGDSCGLTPDHLRFLFDKLIQENNGGMWKDPQSVPGSRSMNEPAFQFPDTAIDSSSSTNSSAPSTPALPAGISGNVSSLTAPYRSERKFLFPDTENYSVHNRLPILVISEGDHPTTTEIQQETENHNKSAAASMSGNIESEGTIVANHEDSTGSQEVDSEAAPSQEAVDKFNKRADGGFTWERHAWNMSTIRGPNAQASWNEVTIQFETIEFDKQAPIIGRGRFGKVLRGFHYGDVAVKVYTMEHISDASKKAEEFKLEVSAYKNTRHDNIALFLGYFMSDGQYGMVMSLSKGSQSLYTLLHVVREKLDLATTRKIAQQICQAVSYLHTKKILHKDLRSKNILLESKNKVVITDFGILSMKRLAHPKQKSGYLTSKFWTNYIAPELAMAMRTEYDEYECDDFPFSENSDVYAFGCVWFEMLTGALPYAGELPHQILFAKTQGIRPVLPNVKCTQELKELLVSCWNTAPQDRPTLTDINLKLTALPKKPRVNRSPSFPVMMKSYESTF.

Positions 152-169 (SRTSSGSTDEPSGQSTPA) are enriched in polar residues. Positions 152 to 172 (SRTSSGSTDEPSGQSTPAIVT) are disordered. A Phorbol-ester/DAG-type zinc finger spans residues 215–269 (PHKWHRSTKFRFSGDAVCHFCQRPLGFGFLNAWEKCRSCKWKVHTQCKGRVGDSC). Disordered regions lie at residues 290–339 (GMWK…ISGN) and 414–433 (DSTG…EAVD). The span at 318-331 (SSSSTNSSAPSTPA) shows a compositional bias: low complexity. A Protein kinase domain is found at 477-748 (DKQAPIIGRG…TDINLKLTAL (272 aa)). Residues 483–491 (IGRGRFGKV) and K503 contribute to the ATP site. Catalysis depends on D600, which acts as the Proton acceptor.

It belongs to the protein kinase superfamily. TKL Ser/Thr protein kinase family. Interacts with mek-2. Mg(2+) is required as a cofactor.

It carries out the reaction L-seryl-[protein] + ATP = O-phospho-L-seryl-[protein] + ADP + H(+). It catalyses the reaction L-threonyl-[protein] + ATP = O-phospho-L-threonyl-[protein] + ADP + H(+). Functionally, serine/threonine-protein kinase which positively regulates Ras-mediated signaling probably acting at the level of let-60/ras or/and lin-45/raf. Involved in sex myoblast migration. Plays a role in responses to M.nematophilum-mediated bacterial infection by promoting tail swelling and preventing constipation. Functions redundantly with ksr-2 in the Ras-mediated regulation of larval survival, the development of excretory canal and in mpk-1 phosphorylation in somatic cells. In addition, involved in determining vulval precursor cell fate during vulval induction independently of its kinase activity. Plays a role in egg-laying. The protein is Kinase suppressor of Ras A of Caenorhabditis elegans.